A 123-amino-acid polypeptide reads, in one-letter code: Prostate stem cell antigen (123 aa).

An N-terminal signal peptide occupies residues 1 to 20 (MKTVFFLLLATYLALHPGAA). The UPAR/Ly6 domain occupies 21–95 (LQCYSCTAQM…CCYSDLCNVN (75 aa)). 5 disulfides stabilise this stretch: Cys23-Cys48, Cys26-Cys35, Cys41-Cys66, Cys70-Cys86, and Cys87-Cys92. Asn40 carries N-linked (GlcNAc...) asparagine glycosylation. Residue Asn95 is the site of GPI-anchor amidated asparagine attachment. Residues 96–123 (GAHTLKPPTTLGLLTVLCSLLLWGSSRL) constitute a propeptide, removed in mature form.

Interacts with CHRNA4. As to expression, predominantly expressed in prostate. Also found in spleen, liver, lung, prostate, kidney and testis. Expressed in brain cortex; expression is increased in transgenic mouse model of Alzheimer disease (at protein level).

It is found in the cell membrane. Functionally, may be involved in the regulation of cell proliferation. Its function is as follows. May act as a modulator of nicotinic acetylcholine receptors (nAChRs) activity. In vitro inhibits nicotine-induced signaling probably implicating alpha-3:beta-2- or alpha-7-containing nAChRs. This Mus musculus (Mouse) protein is Prostate stem cell antigen (Psca).